Here is a 157-residue protein sequence, read N- to C-terminus: dCTP deaminase (157 aa).

DCTP is bound by residues 79–84, Asp-95, Gln-124, and Tyr-138; that span reads RSSLAR.

The protein belongs to the dCTP deaminase family. In terms of assembly, homotrimer.

It catalyses the reaction dCTP + H2O + H(+) = dUTP + NH4(+). It participates in pyrimidine metabolism; dUMP biosynthesis; dUMP from dCTP (dUTP route): step 1/2. In terms of biological role, catalyzes the deamination of dCTP to dUTP. The sequence is that of dCTP deaminase from Thermococcus gammatolerans (strain DSM 15229 / JCM 11827 / EJ3).